Consider the following 541-residue polypeptide: Halolysin-like extracellular serine protease Nep (541 aa).

A signal peptide (tat-type signal) is located at residues 1–33 (MTRDTNSNVGRRSVLKAASALGAFLGLGGVASA). A propeptide spanning residues 34–121 (TPGREPGPKK…DNATYETLEV (88 aa)) is cleaved from the precursor. The region spanning 130-405 (QYAPQQVNCE…YGRVDAELAV (276 aa)) is the Peptidase S8 domain. Active-site charge relay system residues include Asp-157, His-198, and Ser-351. The disordered stretch occupies residues 403-453 (LAVTTDPDNGDDDDDDDDDEDDPGDGECGDETNTATADGELSGGWGGNPSD). Residues 410 to 432 (DNGDDDDDDDDDEDDPGDGECGD) show a composition bias toward acidic residues.

The protein belongs to the peptidase S8 family. In terms of assembly, monomer. Exported by the Tat system. The position of the signal peptide cleavage has not been experimentally proven. After transport across the membrane, the propeptide is probably processed autocatalytically, yielding the mature fully active protease.

The protein localises to the secreted. With respect to regulation, dependent on high salt concentrations for activity and stability. Strongly inhibited by the serine protease inhibitors diisopropyl fluorophosphate (DFP), phenylmethyl sulfonylfluoride (PMSF) and chymostatin. Also inhibited by denaturing agents such as SDS, urea, and HCl guanidinium. Activated by thiol-containing reducing agents such as dithiotreitol (DTT) and 2-mercaptoethanol. Functionally, serine protease that hydrolyzes large proteins such as casein and gelatin. Cleaves preferentially at the carboxyl terminus of Phe, Tyr or Leu. Is also able to catalyze peptide synthesis under different salt concentrations in the presence of dimethyl sulfoxide (DMSO). In Natrialba magadii, this protein is Halolysin-like extracellular serine protease Nep.